The chain runs to 518 residues: Probable cytochrome P450 9h1 (518 aa).

C462 contacts heme.

This sequence belongs to the cytochrome P450 family. Heme serves as cofactor.

The protein localises to the endoplasmic reticulum membrane. It is found in the microsome membrane. In terms of biological role, may be involved in the metabolism of insect hormones and in the breakdown of synthetic insecticides. This chain is Probable cytochrome P450 9h1 (Cyp9h1), found in Drosophila melanogaster (Fruit fly).